Reading from the N-terminus, the 424-residue chain is Proline--tRNA ligase (424 aa).

This sequence belongs to the class-II aminoacyl-tRNA synthetase family. ProS type 2 subfamily. Homodimer.

It localises to the cytoplasm. It carries out the reaction tRNA(Pro) + L-proline + ATP = L-prolyl-tRNA(Pro) + AMP + diphosphate. Its function is as follows. Catalyzes the attachment of proline to tRNA(Pro) in a two-step reaction: proline is first activated by ATP to form Pro-AMP and then transferred to the acceptor end of tRNA(Pro). In Ehrlichia chaffeensis (strain ATCC CRL-10679 / Arkansas), this protein is Proline--tRNA ligase.